A 291-amino-acid chain; its full sequence is Mitochondrial thiamine pyrophosphate carrier 1 (291 aa).

Helical transmembrane passes span 12 to 31, 83 to 99, 120 to 141, 167 to 191, 214 to 230, and 265 to 282; these read GATA…GAVA, IMYI…YSMF, SLIV…FDLL, GGLA…GLMF, FCGF…TFPL, and GFGI…VSLF. 3 Solcar repeats span residues 15-102, 115-200, and 207-290; these read ASVY…FSKA, RPSN…AREV, and NIPF…VLNG.

The protein belongs to the mitochondrial carrier (TC 2.A.29) family.

The protein localises to the mitochondrion inner membrane. Its function is as follows. Mitochondrial transporter that mediates uptake of thiamine pyrophosphate (ThPP) into mitochondria. This chain is Mitochondrial thiamine pyrophosphate carrier 1 (TPC1), found in Meyerozyma guilliermondii (strain ATCC 6260 / CBS 566 / DSM 6381 / JCM 1539 / NBRC 10279 / NRRL Y-324) (Yeast).